The following is a 270-amino-acid chain: Sulfur carrier protein FdhD (270 aa).

Catalysis depends on Cys116, which acts as the Cysteine persulfide intermediate. 253–258 is a Mo-bis(molybdopterin guanine dinucleotide) binding site; the sequence is FAREGK.

It belongs to the FdhD family.

Its subcellular location is the cytoplasm. Its function is as follows. Required for formate dehydrogenase (FDH) activity. Acts as a sulfur carrier protein that transfers sulfur from IscS to the molybdenum cofactor prior to its insertion into FDH. In Haemophilus influenzae (strain 86-028NP), this protein is Sulfur carrier protein FdhD.